The following is a 212-amino-acid chain: Thymidylate kinase (212 aa).

Residue 10–17 participates in ATP binding; sequence GLEGAGKT.

The protein belongs to the thymidylate kinase family.

It carries out the reaction dTMP + ATP = dTDP + ADP. Phosphorylation of dTMP to form dTDP in both de novo and salvage pathways of dTTP synthesis. In Yersinia pestis bv. Antiqua (strain Antiqua), this protein is Thymidylate kinase.